Here is a 141-residue protein sequence, read N- to C-terminus: Cystatin (141 aa).

Positions 1–26 (MVHSQLPVAGPLRLLCALLLLPSATM) are cleaved as a signal peptide. The 101-residue stretch at 29 to 129 (GGLSPRSVTD…CRFQVWSRPW (101 aa)) folds into the Cystatin domain. Positions 73–77 (QVVSG) match the Secondary area of contact motif. Cystine bridges form between Cys-91/Cys-107 and Cys-120/Cys-140.

This sequence belongs to the cystatin family. Expressed at a low level by the venom gland (at protein level).

Its subcellular location is the secreted. Inhibits various C1 cysteine proteases including cathepsin L, papain and cathepsin B. This protein has no toxic activity and its function in the venom is unknown. It may play a role as a housekeeping or regulatory protein. The protein is Cystatin of Pseudechis porphyriacus (Red-bellied black snake).